The following is a 993-amino-acid chain: Desmoglein-3 (993 aa).

A signal peptide spans 1 to 23 (MTCLFPRALGSLALLMVVLLVQG). Positions 24-49 (ELHVKPGGQHREDGTALQLAKRRYKR) are excised as a propeptide. Cadherin domains follow at residues 50–157 (EWVK…PPIF), 158–267 (SQTI…FPVL), 268–388 (RESQ…PPSK), and 384–495 (RPPS…CPSV). At 50–617 (EWVKFAKPCR…YGESSWRLGP (568 aa)) the chain is on the extracellular side. Residues Asn110 and Asn180 are each glycosylated (N-linked (GlcNAc...) asparagine). N-linked (GlcNAc...) asparagine glycosylation is found at Asn459 and Asn546. Residues 618–638 (AAIGLILLGLLMLLLAPLLLL) traverse the membrane as a helical segment. Over 639–993 (TCDCGSGPIG…LYTKETCSHL (355 aa)) the chain is Cytoplasmic. Residues 641–714 (DCGSGPIGGA…NTYAGGTMVE (74 aa)) are required for interaction with CTNND1 and localization at cell-cell junctions. Positions 845–876 (AKQAKPGPKDSGSGADTCARSMEVPQSGSNRY) are disordered. Desmoglein repeat repeat units lie at residues 905-930 (MSTS…LLTE) and 931-961 (TYST…ERVI).

In terms of assembly, homodimer. Part of a complex that contains DSG3, PKP1, YAP1 and YWHAG; the complex is required for localization of DSG3 and YAP1 to the cell membrane in keratinocytes. Interacts with PKP2. Interacts with CTNND1; the interaction facilitates DSG3 localization and retention at cell-cell junctions. Interacts with CDH1; the interaction is required for CDH1 localization to developing adherens junctions. Interacts with RAC1; the interaction is required for DSG3 translocation to cell-cell junctions, organization of cortical F-actin bundles and actin anchoring at cell-cell junctions. Interacts with DSC3; the interaction may limit the interaction of DSC3 with p38MAPK family members and therefore repress p38MAPK signaling activation. In terms of tissue distribution, expressed in the basal layer of the outer root sheath of the telogen hair club, specifically at the cell membrane between the apex of the cells and the surrounding hair club (at protein level). Expression is less abundant between the lateral margins of the outer root sheath basal cells (at protein level). Expressed in epidermis. Expressed in the epithelium of the tongue.

The protein resides in the cell membrane. The protein localises to the cell junction. It is found in the desmosome. Its subcellular location is the cytoplasm. It localises to the tight junction. Its function is as follows. A component of desmosome cell-cell junctions which are required for positive regulation of cellular adhesion. Required for adherens and desmosome junction assembly in response to mechanical force in keratinocytes. Required for desmosome-mediated cell-cell adhesion of cells surrounding the telogen hair club and the basal layer of the outer root sheath epithelium, consequently is essential for the anchoring of telogen hairs in the hair follicle. Required for the maintenance of the epithelial barrier via promoting desmosome-mediated intercellular attachment of suprabasal epithelium to basal cells. May play a role in the protein stability of the desmosome plaque components DSP, JUP, PKP1, PKP2 and PKP3. Required for YAP1 localization at the plasma membrane in keratinocytes in response to mechanical strain, via the formation of an interaction complex composed of DSG3, PKP1 and YWHAG. May also be involved in the positive regulation of YAP1 target gene transcription and as a result cell proliferation. Positively regulates cellular contractility and cell junction formation via organization of cortical F-actin bundles and anchoring of actin to tight junctions, in conjunction with RAC1. The cytoplasmic pool of DSG3 is required for the localization of CDH1 and CTNNB1 at developing adherens junctions, potentially via modulation of SRC activity. Inhibits keratinocyte migration via suppression of p38MAPK signaling, may therefore play a role in moderating wound healing. The sequence is that of Desmoglein-3 (Dsg3) from Mus musculus (Mouse).